Here is a 413-residue protein sequence, read N- to C-terminus: MKFGSLLGLSLVGLSVASPVTNVWKSPRAADDFIRGVNLGGWLVLEPWITPGIFEEGGDSAVDEWTLSAALGHRAHERLKLHWNTFMEQKDFDRIKGAGLTHVRIPIGYWAVAPIQGEPFVQGQVDMLDAAIDWARHSGLKVNVDLHGAPGSQNGFDNSGRLGPANWQKGDTVAQTYKALDVLIQRYAKKDGVVDEINLINEPFPQAGIQVEPLKDYYRQGAAKVKSANPNVAVVISDAFMGPSKWNGFDVGAKTIIDTHHYQVFSPQLVAMDINQHVKAACDFGNDELAKSSIPAIVGEWCGALTDCTQYLNGRHEGARYDGTHKDSDPKTAVPNGCVRKTGGSASQLTDEEKTNTRRYIEAQLDSFSKGHGWFWWTWKTERGSPGWDLNDLLSNGLFPQPLDSRMFLGQCN.

The signal sequence occupies residues 1–17; the sequence is MKFGSLLGLSLVGLSVA. Substrate contacts are provided by Glu-46, Glu-202, and Tyr-262. The Proton donor role is filled by Glu-202. The cysteines at positions 282 and 412 are disulfide-linked. Residue Glu-300 is the Nucleophile of the active site.

It belongs to the glycosyl hydrolase 5 (cellulase A) family. In terms of assembly, monomer.

It is found in the secreted. The protein resides in the cell wall. The enzyme catalyses Successive hydrolysis of beta-D-glucose units from the non-reducing ends of (1-&gt;3)-beta-D-glucans, releasing alpha-glucose.. Major glucan 1,3-beta-glucosidase required for cell wall integrity. Beta-glucanases participate in the metabolism of beta-glucan, the main structural component of the cell wall. Can also function biosynthetically as a transglycosylase. Functions to deliver glucan from the cell to the extracellular matrix. Involved in cell-substrate and cell-cell adhesion. The sequence is that of Probable glucan 1,3-beta-glucosidase ARB_04467 from Arthroderma benhamiae (strain ATCC MYA-4681 / CBS 112371) (Trichophyton mentagrophytes).